Reading from the N-terminus, the 351-residue chain is Porphobilinogen deaminase (351 aa).

Cysteine 242 is modified (S-(dipyrrolylmethanemethyl)cysteine).

It belongs to the HMBS family. As to quaternary structure, monomer. Dipyrromethane is required as a cofactor.

It catalyses the reaction 4 porphobilinogen + H2O = hydroxymethylbilane + 4 NH4(+). It participates in porphyrin-containing compound metabolism; protoporphyrin-IX biosynthesis; coproporphyrinogen-III from 5-aminolevulinate: step 2/4. Its function is as follows. Tetrapolymerization of the monopyrrole PBG into the hydroxymethylbilane pre-uroporphyrinogen in several discrete steps. The sequence is that of Porphobilinogen deaminase from Rickettsia africae (strain ESF-5).